The sequence spans 639 residues: Wall-associated receptor kinase-like 15 (639 aa).

An N-terminal signal peptide occupies residues 1 to 25 (MELPWLSLTTFTLSLLIYFSSTTQA). Over 26–282 (FKRCPNCGST…KRKSCKRWSN (257 aa)) the chain is Extracellular. N-linked (GlcNAc...) asparagine glycosylation is found at Asn-68, Asn-115, Asn-126, Asn-141, and Asn-241. Residues 283–303 (LPLLGGLAGGVGAILIAGFIT) traverse the membrane as a helical segment. Topologically, residues 304 to 639 (KTIVSKQNRR…KEIENILHGI (336 aa)) are cytoplasmic. Residues 354–639 (FAKSNLLGFG…KEIENILHGI (286 aa)) enclose the Protein kinase domain. ATP is bound by residues 360–368 (LGFGGFGEV) and Lys-382. Catalysis depends on Asp-484, which acts as the Proton acceptor.

This sequence belongs to the protein kinase superfamily. Ser/Thr protein kinase family.

The protein localises to the membrane. It carries out the reaction L-seryl-[protein] + ATP = O-phospho-L-seryl-[protein] + ADP + H(+). It catalyses the reaction L-threonyl-[protein] + ATP = O-phospho-L-threonyl-[protein] + ADP + H(+). Functionally, putative serine/threonine-protein kinase that may function as a signaling receptor of extracellular matrix component. This is Wall-associated receptor kinase-like 15 (WAKL15) from Arabidopsis thaliana (Mouse-ear cress).